Reading from the N-terminus, the 73-residue chain is uncharacterized protein (73 aa).

This is an uncharacterized protein from Homo sapiens (Human).